The sequence spans 570 residues: Ribosome-inactivating protein SNAIf (570 aa).

Residues 1–28 (MRVVTKLLYLVVLAICGLGIHGALTHTR) form the signal peptide. N40, N62, and N140 each carry an N-linked (GlcNAc...) asparagine glycan. The active site involves E199. N232 carries N-linked (GlcNAc...) asparagine glycosylation. Cystine bridges form between C284–C316, C332–C351, and C373–C385. Ricin B-type lectin domains lie at 319–439 (VEVT…WTVG) and 441–566 (VEPL…WITT). Residues 329-369 (DGLCVDVRDGHYIDGNTVQLGPCGNECNQLWTFRTDGTIRW) form a 1-alpha repeat. A 1-beta repeat occupies 370–405 (LGKCLTTSSSVMIYDCNTVPPEATKWVVSTDGTITN). The 1-gamma repeat unit spans residues 408 to 440 (SGLVLTAPQAAEGTALSLENNIHAARQGWTVGD). Residues 452–489 (KQMCLTENGENNFVWLEDCVLNRVEQEWALYGDGTIRV) form a 2-alpha repeat. C455 and C470 form a disulfide bridge. N-linked (GlcNAc...) asparagine glycosylation is present at N492. A 2-beta repeat occupies 493–531 (RSLCVTSEDHEPSDLIVILKCEGSGNQRWVFNTNGTISN). The cysteines at positions 496 and 513 are disulfide-linked. 2 N-linked (GlcNAc...) asparagine glycosylation sites follow: N526 and N544. One copy of the 2-gamma repeat lies at 534–567 (AKLVMDVAQSNVSLRKIILYPPTGNPNQQWITTT).

The protein belongs to the ribosome-inactivating protein family. Type 2 RIP subfamily. In terms of assembly, tetramer of four pairs of disulfide bound A-B chains. Post-translationally, the precursor is processed in two chains, A and B, that are linked by a disulfide bond. A small truncated form corresponding roughly to the second ricin B-type lectin domain of the B chain, TrSNAIf, can also be produced. In terms of processing, N-glycosylated. Expressed in fruits.

It catalyses the reaction Endohydrolysis of the N-glycosidic bond at one specific adenosine on the 28S rRNA.. In terms of biological role, neu5Ac(alpha2-6)Gal/GalNAc specific agglutinin. Behaves as a type-2 ribosome-inactivating protein. Strongly inhibits mammalian but not plant ribosomes. The A chain is responsible for inhibiting protein synthesis through the catalytic inactivation of 60S ribosomal subunits by removing adenine from position 4,324 of 28S rRNA. The B chain binds to cell receptors and probably facilitates the entry into the cell of the A chain; B chains are also responsible for cell agglutination (lectin activity). Involved in plant defense against insects. Functionally, binds Neu5Ac(alpha2-6)Gal/GalNAc but has no clear agglutination activity. This is Ribosome-inactivating protein SNAIf from Sambucus nigra (European elder).